The sequence spans 208 residues: MKIVEVKHPLVKHKLGLMRENDISTKRFRELASEVGSLLTYVATADLETETVTIEGWNGPVEIEQIKGKKITVVPILRAGLGMMEGVLENVPSARISVVGVYRDEETLKPVPYFQKLVSNINERMALVVDPMLATGGSMIATIDLLKKAGCQSIKVLVLVAAPEGIKALEEAHPDVELYTASIDQGLNEHGYIIPGLGDAGDKIFGTK.

5-phospho-alpha-D-ribose 1-diphosphate contacts are provided by residues arginine 78, arginine 103, and 130–138 (DPMLATGGS). Residues isoleucine 193 and 198-200 (GDA) each bind uracil. A 5-phospho-alpha-D-ribose 1-diphosphate-binding site is contributed by aspartate 199.

Belongs to the UPRTase family. Mg(2+) is required as a cofactor.

The enzyme catalyses UMP + diphosphate = 5-phospho-alpha-D-ribose 1-diphosphate + uracil. The protein operates within pyrimidine metabolism; UMP biosynthesis via salvage pathway; UMP from uracil: step 1/1. With respect to regulation, allosterically activated by GTP. Functionally, catalyzes the conversion of uracil and 5-phospho-alpha-D-ribose 1-diphosphate (PRPP) to UMP and diphosphate. The sequence is that of Uracil phosphoribosyltransferase from Yersinia pestis.